A 496-amino-acid chain; its full sequence is Chaperone SurA (496 aa).

A signal peptide spans 1–42 (MACKSTAVRSATRVAPTRRLGMVTGALVALMAGAALLPAAHA). The disordered stretch occupies residues 53–80 (RGIFTTPDASPSQPLLRGTLPGPSTASG). PpiC domains are found at residues 235–337 (VQEY…KLVD) and 349–447 (VAQT…QVEG).

It is found in the periplasm. The enzyme catalyses [protein]-peptidylproline (omega=180) = [protein]-peptidylproline (omega=0). In terms of biological role, chaperone involved in the correct folding and assembly of outer membrane proteins. Recognizes specific patterns of aromatic residues and the orientation of their side chains, which are found more frequently in integral outer membrane proteins. May act in both early periplasmic and late outer membrane-associated steps of protein maturation. The sequence is that of Chaperone SurA from Ralstonia nicotianae (strain ATCC BAA-1114 / GMI1000) (Ralstonia solanacearum).